Reading from the N-terminus, the 343-residue chain is Dihydroorotase (343 aa).

Positions 13 and 15 each coordinate Zn(2+). Residues 15–17 (HLR) and Asn-41 contribute to the substrate site. Zn(2+)-binding residues include Lys-99, His-136, and His-174. Lys-99 carries the post-translational modification N6-carboxylysine. His-136 serves as a coordination point for substrate. Residue Leu-219 coordinates substrate. Position 247 (Asp-247) interacts with Zn(2+). Asp-247 is a catalytic residue. 2 residues coordinate substrate: His-251 and Ala-263.

The protein belongs to the metallo-dependent hydrolases superfamily. DHOase family. Class II DHOase subfamily. In terms of assembly, homodimer. Requires Zn(2+) as cofactor.

The enzyme catalyses (S)-dihydroorotate + H2O = N-carbamoyl-L-aspartate + H(+). Its pathway is pyrimidine metabolism; UMP biosynthesis via de novo pathway; (S)-dihydroorotate from bicarbonate: step 3/3. Its function is as follows. Catalyzes the reversible cyclization of carbamoyl aspartate to dihydroorotate. The polypeptide is Dihydroorotase (Alkalilimnicola ehrlichii (strain ATCC BAA-1101 / DSM 17681 / MLHE-1)).